The following is a 255-amino-acid chain: 5'-nucleotidase SurE (255 aa).

Positions 8, 9, 39, and 95 each coordinate a divalent metal cation.

Belongs to the SurE nucleotidase family. The cofactor is a divalent metal cation.

The protein localises to the cytoplasm. It catalyses the reaction a ribonucleoside 5'-phosphate + H2O = a ribonucleoside + phosphate. Functionally, nucleotidase that shows phosphatase activity on nucleoside 5'-monophosphates. The polypeptide is 5'-nucleotidase SurE (Rubrivivax gelatinosus (strain NBRC 100245 / IL144)).